The primary structure comprises 312 residues: tRNA dimethylallyltransferase (312 aa).

11–18 (GLTATGKT) is an ATP binding site. 13-18 (TATGKT) is a binding site for substrate. The tract at residues 36-39 (DSMC) is interaction with substrate tRNA.

The protein belongs to the IPP transferase family. As to quaternary structure, monomer. The cofactor is Mg(2+).

It carries out the reaction adenosine(37) in tRNA + dimethylallyl diphosphate = N(6)-dimethylallyladenosine(37) in tRNA + diphosphate. Catalyzes the transfer of a dimethylallyl group onto the adenine at position 37 in tRNAs that read codons beginning with uridine, leading to the formation of N6-(dimethylallyl)adenosine (i(6)A). The polypeptide is tRNA dimethylallyltransferase (Caldicellulosiruptor saccharolyticus (strain ATCC 43494 / DSM 8903 / Tp8T 6331)).